The following is a 367-amino-acid chain: Folliculin-like protein bhd1 (367 aa).

2 disordered regions span residues 41 to 75 (RSIG…QSST) and 92 to 115 (SKGP…SPIS). The segment covering 54-64 (EAFKNELDNRN) has biased composition (basic and acidic residues). 2 stretches are compositionally biased toward polar residues: residues 65–75 (NADSQSLQSST) and 99–115 (RVNS…SPIS). A uDENN FLCN/SMCR8-type domain is found at 131 to 302 (FSVPDVQPRL…SNIGTAPSYE (172 aa)).

Belongs to the folliculin family.

It localises to the nucleus. It is found in the cytoplasm. The sequence is that of Folliculin-like protein bhd1 (bhd1) from Schizosaccharomyces pombe (strain 972 / ATCC 24843) (Fission yeast).